The following is a 244-amino-acid chain: 7-cyano-7-deazaguanine synthase (244 aa).

Phe-14–Val-24 is an ATP binding site. The Zn(2+) site is built by Cys-202, Cys-217, Cys-220, and Cys-223.

The protein belongs to the QueC family. Zn(2+) is required as a cofactor.

It carries out the reaction 7-carboxy-7-deazaguanine + NH4(+) + ATP = 7-cyano-7-deazaguanine + ADP + phosphate + H2O + H(+). It participates in purine metabolism; 7-cyano-7-deazaguanine biosynthesis. Catalyzes the ATP-dependent conversion of 7-carboxy-7-deazaguanine (CDG) to 7-cyano-7-deazaguanine (preQ(0)). In Burkholderia mallei (strain NCTC 10229), this protein is 7-cyano-7-deazaguanine synthase.